Here is a 542-residue protein sequence, read N- to C-terminus: Keratin, type II cytoskeletal 75 (542 aa).

The segment covering 1 to 26 has biased composition (polar residues); the sequence is MSRQSTVTFHSGSRRGFSTASATTPT. The disordered stretch occupies residues 1-44; that stretch reads MSRQSTVTFHSGSRRGFSTASATTPTAGRSRFSSVSVARSSGNS. The head stretch occupies residues 1–139; it reads MSRQSTVTFH…DPTIQRVRKE (139 aa). Over residues 27-42 the composition is skewed to low complexity; that stretch reads AGRSRFSSVSVARSSG. The segment at 140–175 is coil 1A; it reads EREQIKTLNNKFASFIDKVRFLEQQNKVLETKWNLL. Residues 140–453 enclose the IF rod domain; sequence EREQIKTLNN…KLLEGEECRL (314 aa). The tract at residues 176 to 194 is linker 1; the sequence is QEQGSRTVRQNLEPFFDAY. Positions 195-287 are coil 1B; it reads VNDLRRQLDS…VYEAELSQMQ (93 aa). A linker 12 region spans residues 288–310; the sequence is NQVSDTSVVLSMDNNRSLDLDSI. Residues 311 to 449 form a coil 2 region; it reads IAEVKAQYED…ATYRKLLEGE (139 aa). The tail stretch occupies residues 450–542; it reads ECRLSGEGVS…TSSSRKSYKH (93 aa). A disordered region spans residues 514 to 542; that stretch reads TSSSRGPVGSGSSIKFVSSTSSSRKSYKH.

Belongs to the intermediate filament family. In terms of assembly, heterodimer of a type I and a type II keratin. May associate with KRT17.

Plays a central role in hair and nail formation. Essential component of keratin intermediate filaments in the companion layer of the hair follicle. In Rattus norvegicus (Rat), this protein is Keratin, type II cytoskeletal 75 (Krt75).